Here is a 446-residue protein sequence, read N- to C-terminus: Tubulin beta-2 chain (446 aa).

GTP is bound by residues glutamine 11, glutamate 69, serine 138, glycine 142, threonine 143, glycine 144, asparagine 204, and asparagine 226. Glutamate 69 is a Mg(2+) binding site.

It belongs to the tubulin family. In terms of assembly, dimer of alpha and beta chains. A typical microtubule is a hollow water-filled tube with an outer diameter of 25 nm and an inner diameter of 15 nM. Alpha-beta heterodimers associate head-to-tail to form protofilaments running lengthwise along the microtubule wall with the beta-tubulin subunit facing the microtubule plus end conferring a structural polarity. Microtubules usually have 13 protofilaments but different protofilament numbers can be found in some organisms and specialized cells. It depends on Mg(2+) as a cofactor.

It localises to the cytoplasm. The protein localises to the cytoskeleton. Tubulin is the major constituent of microtubules, a cylinder consisting of laterally associated linear protofilaments composed of alpha- and beta-tubulin heterodimers. Microtubules grow by the addition of GTP-tubulin dimers to the microtubule end, where a stabilizing cap forms. Below the cap, tubulin dimers are in GDP-bound state, owing to GTPase activity of alpha-tubulin. The chain is Tubulin beta-2 chain (tub2) from Hypocrea rufa (Trichoderma viride).